The chain runs to 224 residues: ATP-dependent dethiobiotin synthetase BioD (224 aa).

Thr18 contributes to the Mg(2+) binding site. The active site involves Lys39. Substrate is bound at residue Ser43. Asp56 and Glu117 together coordinate Mg(2+). ATP-binding positions include Asp56, 117-120, and 177-178; these read EGVG and NE.

This sequence belongs to the dethiobiotin synthetase family. Homodimer. Mg(2+) serves as cofactor.

The protein localises to the cytoplasm. It catalyses the reaction (7R,8S)-7,8-diammoniononanoate + CO2 + ATP = (4R,5S)-dethiobiotin + ADP + phosphate + 3 H(+). It functions in the pathway cofactor biosynthesis; biotin biosynthesis; biotin from 7,8-diaminononanoate: step 1/2. Functionally, catalyzes a mechanistically unusual reaction, the ATP-dependent insertion of CO2 between the N7 and N8 nitrogen atoms of 7,8-diaminopelargonic acid (DAPA, also called 7,8-diammoniononanoate) to form a ureido ring. The polypeptide is ATP-dependent dethiobiotin synthetase BioD (Xanthomonas axonopodis pv. citri (strain 306)).